The following is a 1091-amino-acid chain: Error-prone DNA polymerase (1091 aa).

The disordered stretch occupies residues 1–51; it reads MGWSNGPPSWAEMERVLNGKPRHAGVPAFDADGDVPRSRKRGAYQPPGRER.

This sequence belongs to the DNA polymerase type-C family. DnaE2 subfamily.

The protein localises to the cytoplasm. It carries out the reaction DNA(n) + a 2'-deoxyribonucleoside 5'-triphosphate = DNA(n+1) + diphosphate. DNA polymerase involved in damage-induced mutagenesis and translesion synthesis (TLS). It is not the major replicative DNA polymerase. This is Error-prone DNA polymerase from Mycobacterium bovis (strain ATCC BAA-935 / AF2122/97).